The chain runs to 431 residues: GTPase Obg (431 aa).

Residues 1–158 (MFVDQVKINV…REIRLELKVL (158 aa)) form the Obg domain. The disordered stretch occupies residues 125-145 (GNIHFASPKNPAPEIAENGEP). The region spanning 159 to 335 (ADVGLVGFPS…LLQRTADMLA (177 aa)) is the OBG-type G domain. GTP-binding positions include 165 to 172 (GFPSVGKS), 190 to 194 (FTTLV), 212 to 215 (DLPG), 282 to 285 (NKMD), and 316 to 318 (SAL). S172 and T192 together coordinate Mg(2+). Residues 353–431 (YNFQPEAEFT…IDDFTFEYMA (79 aa)) enclose the OCT domain.

It belongs to the TRAFAC class OBG-HflX-like GTPase superfamily. OBG GTPase family. Monomer. The cofactor is Mg(2+).

It is found in the cytoplasm. In terms of biological role, an essential GTPase which binds GTP, GDP and possibly (p)ppGpp with moderate affinity, with high nucleotide exchange rates and a fairly low GTP hydrolysis rate. Plays a role in control of the cell cycle, stress response, ribosome biogenesis and in those bacteria that undergo differentiation, in morphogenesis control. In Levilactobacillus brevis (strain ATCC 367 / BCRC 12310 / CIP 105137 / JCM 1170 / LMG 11437 / NCIMB 947 / NCTC 947) (Lactobacillus brevis), this protein is GTPase Obg.